Reading from the N-terminus, the 164-residue chain is Transcriptional regulator MraZ (164 aa).

SpoVT-AbrB domains lie at 7–60 (HYTN…EIDG) and 83–126 (SEIL…EPGR). Residues 144 to 164 (QLSARHAAPDAPPLRSHGARE) are disordered.

The protein belongs to the MraZ family. As to quaternary structure, forms oligomers.

The protein localises to the cytoplasm. It is found in the nucleoid. This chain is Transcriptional regulator MraZ, found in Methylocella silvestris (strain DSM 15510 / CIP 108128 / LMG 27833 / NCIMB 13906 / BL2).